Consider the following 452-residue polypeptide: Caspase-2 (452 aa).

An N-acetylalanine modification is found at Ala-2. A propeptide spanning residues 2-169 is cleaved from the precursor; that stretch reads AASSGRSQSS…TMEHSLDNGD (168 aa). The CARD domain maps to 32-121; sequence MHPDHQETLK…GHLEDLLLTT (90 aa). Ser-157 is subject to Phosphoserine. Catalysis depends on residues His-277 and Cys-320. Positions 326-333 are excised as a propeptide; that stretch reads DRGVDQQD. Positions 327–336 are enriched in basic and acidic residues; the sequence is RGVDQQDGKN. The segment at 327–349 is disordered; the sequence is RGVDQQDGKNHAQSPGCEESDAG. A Phosphoserine modification is found at Ser-340.

This sequence belongs to the peptidase C14A family. In terms of assembly, heterotetramer that consists of two anti-parallel arranged heterodimers, each one formed by a p18 subunit and a p12 subunit. Forms a complex named the PIDDosome with PIDD1 and CRADD. Interacts with NOL3 (via CARD domain); inhibits CASP2 activity in a phosphorylation-dependent manner. The mature protease can process its own propeptide, but not that of other caspases.

The enzyme catalyses Strict requirement for an Asp residue at P1, with 316-Asp being essential for proteolytic activity and has a preferred cleavage sequence of Val-Asp-Val-Ala-Asp-|-.. In terms of biological role, involved in the activation cascade of caspases responsible for apoptosis execution. Might function by either activating some proteins required for cell death or inactivating proteins necessary for cell survival. Associates with PIDD1 and CRADD to form the PIDDosome, a complex that activates CASP2 and triggers apoptosis in response to genotoxic stress. This Rattus norvegicus (Rat) protein is Caspase-2 (Casp2).